The primary structure comprises 556 residues: Peptide chain release factor 3 (556 aa).

One can recognise a tr-type G domain in the interval 28 to 297; sequence QQRRNFAIIS…AFLDYALKPG (270 aa). GTP is bound by residues 37 to 44, 105 to 109, and 159 to 162; these read SHPDAGKT, DTPGH, and NKMD.

It belongs to the TRAFAC class translation factor GTPase superfamily. Classic translation factor GTPase family. PrfC subfamily.

The protein resides in the cytoplasm. Functionally, increases the formation of ribosomal termination complexes and stimulates activities of RF-1 and RF-2. It binds guanine nucleotides and has strong preference for UGA stop codons. It may interact directly with the ribosome. The stimulation of RF-1 and RF-2 is significantly reduced by GTP and GDP, but not by GMP. The sequence is that of Peptide chain release factor 3 from Synechococcus elongatus (strain ATCC 33912 / PCC 7942 / FACHB-805) (Anacystis nidulans R2).